Here is a 290-residue protein sequence, read N- to C-terminus: Sodium/potassium-transporting ATPase subunit beta-2 (290 aa).

At 1 to 39 (MVIQKEKKSCGQVVEEWKEFVWNPRTHQFMGRTGTSWAF) the chain is on the cytoplasmic side. The helical; Signal-anchor for type II membrane protein transmembrane segment at 40-67 (ILLFYLVFYGFLTAMFTLTMWVMLQTVS) threads the bilayer. At 68–290 (DHTPKYQDRL…VAFKLRINKT (223 aa)) the chain is on the extracellular side. 2 N-linked (GlcNAc...) asparagine glycosylation sites follow: Asn96 and Asn118. Cys129 and Cys150 are joined by a disulfide. Residues Asn153 and Asn159 are each glycosylated (N-linked (GlcNAc...) asparagine). Cysteines 160 and 177 form a disulfide. 3 N-linked (GlcNAc...) asparagine glycosylation sites follow: Asn193, Asn197, and Asn238. Residues 193–290 (NQSMNVTCAG…VAFKLRINKT (98 aa)) are immunoglobulin-like. Residues Cys200 and Cys261 are joined by a disulfide bond.

Belongs to the X(+)/potassium ATPases subunit beta family. In terms of assembly, the sodium/potassium-transporting ATPase is composed of a catalytic alpha subunit, an auxiliary non-catalytic beta subunit and an additional regulatory subunit. Interacts with BSG.

It is found in the cell membrane. In terms of biological role, this is the non-catalytic component of the active enzyme, which catalyzes the hydrolysis of ATP coupled with the exchange of Na(+) and K(+) ions across the plasma membrane. The exact function of the beta-2 subunit is not known. Mediates cell adhesion of neurons and astrocytes, and promotes neurite outgrowth. In Ochotona curzoniae (Black-lipped pika), this protein is Sodium/potassium-transporting ATPase subunit beta-2 (ATP1B2).